The chain runs to 100 residues: Apolipoprotein C-II (100 aa).

Residues Met1–Ala22 form the signal peptide. A lipid binding region spans residues Ser66–Met74. The lipoprotein lipase cofactor stretch occupies residues Ser78–Glu100.

The protein belongs to the apolipoprotein C2 family. In terms of processing, proapolipoprotein C-II is synthesized as a sialic acid containing glycoprotein which is subsequently desialylated prior to its proteolytic processing. Proapolipoprotein C-II, the major form found in plasma undergoes proteolytic cleavage of its N-terminal hexapeptide to generate the mature form apolipoprotein C-II, which occurs as the minor form in plasma.

Its subcellular location is the secreted. Its function is as follows. Component of chylomicrons, very low-density lipoproteins (VLDL), low-density lipoproteins (LDL), and high-density lipoproteins (HDL) in plasma. Plays an important role in lipoprotein metabolism as an activator of lipoprotein lipase. This Ellobius talpinus (Northern mole vole) protein is Apolipoprotein C-II (APOC2).